A 956-amino-acid chain; its full sequence is Dual specificity protein kinase YAK1 homolog (956 aa).

The Protein kinase domain maps to 122 to 464 (YIVKDLLGHG…PFQAAKHPFI (343 aa)). ATP is bound by residues 128–136 (LGHGTFGQV) and Lys-151. Ser-222 is modified (phosphoserine). Asp-249 functions as the Proton acceptor in the catalytic mechanism. Disordered stretches follow at residues 620–657 (LGTS…HGSP), 672–781 (SAGY…NYSD), and 806–956 (GSTD…GSIA). A compositionally biased stretch (polar residues) spans 622-636 (TSPSQFTPNTNNQFL). Residues 672–691 (SAGYSGGSQSQDSSLSQAQG) are compositionally biased toward low complexity. 3 stretches are compositionally biased toward polar residues: residues 697-713 (FYQN…SPSR), 725-757 (QTQG…SSTA), and 806-817 (GSTDASSYSRRF). Residues 818-830 (NSNASTSSSNPTT) are compositionally biased toward low complexity. 3 stretches are compositionally biased toward polar residues: residues 838 to 849 (QAFSQVETGSPP), 870 to 884 (VSQN…QPPQ), and 902 to 912 (MNAQLPPSNTN). The segment covering 913 to 924 (SGGQQRSPRSSS) has biased composition (low complexity). Residues 937-947 (NHVPNVPSTSH) show a composition bias toward polar residues.

It belongs to the protein kinase superfamily. Ser/Thr protein kinase family. Post-translationally, autophosphorylated at Ser-222.

The catalysed reaction is L-seryl-[protein] + ATP = O-phospho-L-seryl-[protein] + ADP + H(+). It catalyses the reaction L-threonyl-[protein] + ATP = O-phospho-L-threonyl-[protein] + ADP + H(+). The enzyme catalyses L-tyrosyl-[protein] + ATP = O-phospho-L-tyrosyl-[protein] + ADP + H(+). Functionally, dual specificity protein kinase that phosphorylates ANN1, ANN2 and CP29B at serine and threonine residues, and ANN1, ANN2 and ANN4 at tyrosine residues. May regulate the phosphorylation status of annexin proteins. Acts as a positive regulator in abscisic acid (ABA)-mediated regulation of postgermination growth and drought response. May regulate the expression of ABA-responsive genes such as RD22, RD29A, LTI65/RD29B and RAB18. The polypeptide is Dual specificity protein kinase YAK1 homolog (Arabidopsis thaliana (Mouse-ear cress)).